Reading from the N-terminus, the 494-residue chain is UPF0371 protein SPCG_0344 (494 aa).

Belongs to the UPF0371 family.

The sequence is that of UPF0371 protein SPCG_0344 from Streptococcus pneumoniae (strain CGSP14).